Reading from the N-terminus, the 177-residue chain is Probasin (177 aa).

A signal peptide spans 1 to 17; sequence MRVILLLLTLDVLGVSS. C79 and C170 are oxidised to a cystine.

The protein belongs to the calycin superfamily. Lipocalin family. In terms of tissue distribution, prostatic epithelial cells.

The protein localises to the nucleus. Its subcellular location is the secreted. The sequence is that of Probasin (Pbsn) from Rattus norvegicus (Rat).